The following is a 117-amino-acid chain: Galanin-like peptide (117 aa).

The first 23 residues, 1–23 (MACSVHLVLFLTILLSLAETPES), serve as a signal peptide directing secretion. A propeptide spanning residues 86 to 117 (TMGETFVKANTGDMHILDKNVPKEEATLDSES) is cleaved from the precursor.

It belongs to the galanin family. As to expression, isoform 2 is found in brain, thymus and skin. Isoform 2 is found in the skin, in pericytes covering microvascular arterioles and venules on their abluminal surfaces. In larger vessels, isoform 2 is expressed in layers of smooth muscle cells. Isoform 2 is not detected in endothelial cells.

It localises to the secreted. In terms of biological role, hypothalamic neuropeptide which binds to the G-protein-coupled galanin receptors (GALR1, GALR2 and GALR3). Involved in a large number of putative physiological functions in CNS homeostatic processes, including the regulation of gonadotropin-releasing hormone secretion. Its function is as follows. Exhibits antimicrobial activity against Gram-negative bacterias, inducing bacterial membrane blebbing. Exhibits potent and dose-dependent vasoconstrictor and anti-edema activity in the cutaneous microvasculature, a physiologic effects which does not appear to be mediated via GALR1 or GALR2. The sequence is that of Galanin-like peptide (Galp) from Mus musculus (Mouse).